Consider the following 225-residue polypeptide: Prepilin leader peptidase/N-methyltransferase (225 aa).

Residues 1 to 2 (MT) lie on the Periplasmic side of the membrane. The helical transmembrane segment at 3–23 (MLLPLFILVGFIADYFVNAIA) threads the bilayer. Over 24–67 (YHLSPLEDKTALTFRQVLVHFRQKKYAWHDTVPLILCVAAAIAC) the chain is Cytoplasmic. The helical transmembrane segment at 68–88 (ALAPFTPIVTGALFLYFCFVL) threads the bilayer. Residues 89-103 (TLSVIDFRTQLLPDK) are Periplasmic-facing. The helical transmembrane segment at 104–124 (LTLPLLWLGLVFNAQYGLIDL) threads the bilayer. The Cytoplasmic portion of the chain corresponds to 125–127 (HDA). The helical transmembrane segment at 128–148 (VYGAVAGYGVLWCVYWGVWLV) threads the bilayer. The Periplasmic segment spans residues 149–174 (CHKEGLGYGDFKLLAAAGAWCGWQTL). Residues 175-195 (PMILLIASLGGIGYAIVSQLL) form a helical membrane-spanning segment. Topologically, residues 196-202 (QRRTITT) are cytoplasmic. A helical transmembrane segment spans residues 203 to 223 (IAFGPWLALGSMINLGYLAWI). Over 224 to 225 (SY) the chain is Periplasmic.

It belongs to the peptidase A24 family.

Its subcellular location is the cell inner membrane. The enzyme catalyses Typically cleaves a -Gly-|-Phe- bond to release an N-terminal, basic peptide of 5-8 residues from type IV prepilin, and then N-methylates the new N-terminal amino group, the methyl donor being S-adenosyl-L-methionine.. Its function is as follows. Plays a role in type II pseudopili formation by proteolytically removing the leader sequence from substrate proteins and subsequently monomethylating the alpha-amino group of the newly exposed N-terminal phenylalanine. Substrates include proteins required for biogenesis of the type II general secretory apparatus. The sequence is that of Prepilin leader peptidase/N-methyltransferase (gspO) from Escherichia coli (strain K12).